The sequence spans 32 residues: Photosystem II reaction center protein T (32 aa).

A helical membrane pass occupies residues 3-23 (AITYTFILFLTLGLLFFAVAF).

The protein belongs to the PsbT family. As to quaternary structure, PSII is composed of 1 copy each of membrane proteins PsbA, PsbB, PsbC, PsbD, PsbE, PsbF, PsbH, PsbI, PsbJ, PsbK, PsbL, PsbM, PsbT, PsbX, PsbY, PsbZ, Psb30/Ycf12, peripheral proteins PsbO, CyanoQ (PsbQ), PsbU, PsbV and a large number of cofactors. It forms dimeric complexes.

Its subcellular location is the cellular thylakoid membrane. Found at the monomer-monomer interface of the photosystem II (PS II) dimer, plays a role in assembly and dimerization of PSII. PSII is a light-driven water plastoquinone oxidoreductase, using light energy to abstract electrons from H(2)O, generating a proton gradient subsequently used for ATP formation. This is Photosystem II reaction center protein T from Synechococcus sp. (strain JA-2-3B'a(2-13)) (Cyanobacteria bacterium Yellowstone B-Prime).